The sequence spans 44 residues: AQKCGEQGRGAKCPNCLCCGRYGFCGSTPDYCGVGCQSQCRGCR.

The Chitin-binding type-1 domain occupies 1-42 (AQKCGEQGRGAKCPNCLCCGRYGFCGSTPDYCGVGCQSQCRG). 5 cysteine pairs are disulfide-bonded: Cys4/Cys19, Cys13/Cys25, Cys16/Cys43, Cys18/Cys32, and Cys36/Cys40.

In terms of processing, contains 5 disulfide bonds.

Its function is as follows. Binds chitin. Has antifungal activity against F.oxysporum 16/10 (IC(50)=4.1 uM) and B.sorokiniana 6/10 (IC(50)=2.7 uM). Inhibits germination of fungal spores. This is Antimicrobial peptide 1b from Leymus arenarius (Lyme grass).